A 538-amino-acid chain; its full sequence is Methyl-accepting chemotaxis protein NahY (538 aa).

At 1–9 (MQQFTIRTR) the chain is on the cytoplasmic side. A helical transmembrane segment spans residues 10-30 (LLMLVGAMFIGFITIELMGFS). Residues 31 to 187 (ALQRGVASLN…AVVLYDSSRT (157 aa)) lie on the Periplasmic side of the membrane. A helical transmembrane segment spans residues 188–208 (MLALLLLGILICGGVFATRLI). Residues 209-261 (RSIIHPLTTLKDAAARVALGDLSQSIQVSGRNEVTDVQQSVQAMQANLRNTLQ) enclose the HAMP domain. At 209-538 (RSIIHPLTTL…LNNLVNRFSM (330 aa)) the chain is on the cytoplasmic side. A Methyl-accepting transducer domain is found at 266–502 (SAAQLAAAAE…EVDRNLVAIS (237 aa)).

This sequence belongs to the methyl-accepting chemotaxis (MCP) protein family.

The protein localises to the cell inner membrane. In terms of biological role, chemotactic-signal transducers respond to changes in the concentration of attractants and repellents in the environment, transduce a signal from the outside to the inside of the cell, and facilitate sensory adaptation through the variation of the level of methylation. Chemoreceptor for naphthalene or a related compound. May facilitate biodegradation. In Pseudomonas putida (Arthrobacter siderocapsulatus), this protein is Methyl-accepting chemotaxis protein NahY (nahY).